We begin with the raw amino-acid sequence, 596 residues long: Arginine--tRNA ligase (596 aa).

The short motif at Ala-127–Arg-137 is the 'HIGH' region element.

The protein belongs to the class-I aminoacyl-tRNA synthetase family.

Its subcellular location is the cytoplasm. It carries out the reaction tRNA(Arg) + L-arginine + ATP = L-arginyl-tRNA(Arg) + AMP + diphosphate. The protein is Arginine--tRNA ligase of Haloquadratum walsbyi (strain DSM 16790 / HBSQ001).